The sequence spans 388 residues: MTTISDLPYDLVKEIFSWVPFTSLRAVRSTCKTWNALSKNQIFGKKSVARNQFLELMILDSRVCSLRFDLQKIRNEDEEDLVDPSMKQISIPNNDDQVEISRVYHCDGLLLCIPKDNSSLMLWNPYLGQTKRIRPKNTFHRDDSFALGYNNRNHKILRLNEENESHIDVYDFSSDSWRTVPDDNPYRDELIYQSGVSLKGNAYFFDREVTTEAEVGTEDLLITGIEDYLRCFDFTTERFGPRLPLPFILPSPSFEYLALSWARDDKLAVLYSHYDTFDIIEIWISTKIEPNAVSWSTFLKVDMSLINGLTDDFLIRFEPKSFFIDEEKKVAVLFDTKVTETCRYQMAYIVGDDGYFKSVNIGVISNSHWIGGELVRSSYVPSLLQLQV.

The region spanning 1–47 (MTTISDLPYDLVKEIFSWVPFTSLRAVRSTCKTWNALSKNQIFGKKS) is the F-box domain.

This is Putative F-box protein At3g49520 from Arabidopsis thaliana (Mouse-ear cress).